A 431-amino-acid polypeptide reads, in one-letter code: Saglin (431 aa).

The first 39 residues, 1–39 (MSVRGYSGVQVISSRKHRSMSRLPTVLLLLASAAVLAAG), serve as a signal peptide directing secretion. A glycan (N-linked (GlcNAc...) asparagine) is linked at Asn95. A coiled-coil region spans residues 120 to 169 (LDDAQRQMEQEHRQYAATLEEQLHAAQQETQQEQEMKKALQKQLDALTDS).

In terms of assembly, homodimer; disulfide-linked. (Microbial infection) Interacts with Plasmodium berghei TRAP (via integrin-like A-domain); the interaction probably promotes sporozoite invasion of salivary gland. Female saliva (at protein level). Female salivary gland (at protein level).

It localises to the secreted. In terms of biological role, (Microbial infection) Facilitates invasion of mosquito salivary glands by Plasmodium yoelii sporozoites. (Microbial infection) Facilitates invasion of mosquito salivary glands by Plasmodium falciparum sporozoites. Functionally, (Microbial infection) Probably facilitates invasion of mosquito salivary glands by Plasmodium berghei sporozoites. This chain is Saglin, found in Anopheles gambiae (African malaria mosquito).